Here is a 531-residue protein sequence, read N- to C-terminus: UDP-glucuronosyltransferase 1A7 (531 aa).

The first 25 residues, 1-25 (MAPADFPASLPLCVCLLLASGLAQA), serve as a signal peptide directing secretion. N-linked (GlcNAc...) asparagine glycans are attached at residues Asn-293 and Asn-431. The chain crosses the membrane as a helical span at residues 489 to 509 (VIGFLLAIVLTVVFIVFKCCA).

The protein belongs to the UDP-glycosyltransferase family. In terms of assembly, homodimer. Homooligomer. Interacts with UGT1A1, UGT1A3, UGT1A4, UGT1A6, UGT1A8, UGT1A9 and UGT1A10 to form heterodimers. Widely expressed with highest levels detected in colon and kidney.

The protein localises to the endoplasmic reticulum membrane. The catalysed reaction is glucuronate acceptor + UDP-alpha-D-glucuronate = acceptor beta-D-glucuronoside + UDP + H(+). It carries out the reaction 17alpha-estradiol + UDP-alpha-D-glucuronate = 17alpha-estradiol 3-O-(beta-D-glucuronate) + UDP + H(+). It catalyses the reaction prunetin + UDP-alpha-D-glucuronate = prunetin-5-O-beta-D-glucuronide + UDP. The enzyme catalyses 5-epi-5-F2t-IsoP + UDP-alpha-D-glucuronate = 5-epi-5-F2t-IsoP-glucuronide + UDP + H(+). The catalysed reaction is (E)-ferulate + UDP-alpha-D-glucuronate = (E)-ferulic acid beta-D-glucuronate ester + UDP. It carries out the reaction candesartan + UDP-alpha-D-glucuronate = candesartan O-beta-D-glucuronoside + UDP. It catalyses the reaction SN-38 + UDP-alpha-D-glucuronate = SN-38 O-beta-D-glucuronide + UDP + H(+). The enzyme catalyses mycophenolate + UDP-alpha-D-glucuronate = mycophenolate 7-O-beta-D-glucuronide + UDP + H(+). Its function is as follows. UDP-glucuronosyltransferase (UGT) that catalyzes phase II biotransformation reactions in which lipophilic substrates are conjugated with glucuronic acid to increase the metabolite's water solubility, thereby facilitating excretion into either the urine or bile. Essential for the elimination and detoxification of drugs, xenobiotics and endogenous compounds. Catalyzes the glucuronidation of endogenous estrogen hormone epiestradiol. Involved in the glucuronidation of F2-isoprostane (5-epi-5-F2t-IsoP). Involved in the glucuronidation of the phytochemical ferulic acid at the carboxylic acid group. Also catalyzes the glucuronidation of the isoflavones genistein, daidzein, glycitein, formononetin, biochanin A and prunetin, which are phytoestrogens with anticancer and cardiovascular properties. Involved in the glucuronidation of the AGTR1 angiotensin receptor antagonist caderastan, a drug which can inhibit the effect of angiotensin II. Involved in the biotransformation of 7-ethyl-10-hydroxycamptothecin (SN-38), the pharmacologically active metabolite of the anticancer drug irinotecan. Also metabolizes mycophenolate, an immunosuppressive agent. The sequence is that of UDP-glucuronosyltransferase 1A7 from Mus musculus (Mouse).